Reading from the N-terminus, the 98-residue chain is NADH-ubiquinone oxidoreductase chain 4L (98 aa).

Helical transmembrane passes span 1–21, 29–49, and 61–81; these read MPSI…GMLI, SLLC…LTAL, and IVLL…LVMV.

Belongs to the complex I subunit 4L family. Core subunit of respiratory chain NADH dehydrogenase (Complex I) which is composed of 45 different subunits.

The protein localises to the mitochondrion inner membrane. It catalyses the reaction a ubiquinone + NADH + 5 H(+)(in) = a ubiquinol + NAD(+) + 4 H(+)(out). Core subunit of the mitochondrial membrane respiratory chain NADH dehydrogenase (Complex I) which catalyzes electron transfer from NADH through the respiratory chain, using ubiquinone as an electron acceptor. Part of the enzyme membrane arm which is embedded in the lipid bilayer and involved in proton translocation. The sequence is that of NADH-ubiquinone oxidoreductase chain 4L (MT-ND4L) from Lepus europaeus (European hare).